The following is a 464-amino-acid chain: ATP synthase subunit beta 2 (464 aa).

Residue 147–154 (GGAGVGKT) coordinates ATP.

It belongs to the ATPase alpha/beta chains family. As to quaternary structure, F-type ATPases have 2 components, CF(1) - the catalytic core - and CF(0) - the membrane proton channel. CF(1) has five subunits: alpha(3), beta(3), gamma(1), delta(1), epsilon(1). CF(0) has four main subunits: a(1), b(1), b'(1) and c(9-12).

The protein resides in the cell inner membrane. It catalyses the reaction ATP + H2O + 4 H(+)(in) = ADP + phosphate + 5 H(+)(out). In terms of biological role, produces ATP from ADP in the presence of a proton gradient across the membrane. The catalytic sites are hosted primarily by the beta subunits. This chain is ATP synthase subunit beta 2, found in Cereibacter sphaeroides (strain ATCC 17029 / ATH 2.4.9) (Rhodobacter sphaeroides).